The following is a 478-amino-acid chain: Abscisate beta-glucosyltransferase (478 aa).

H20 serves as the catalytic Proton acceptor. H20 is an an anthocyanidin binding site. Residue D108 is the Charge relay of the active site. UDP-alpha-D-glucose-binding residues include A340, Q342, H357, W360, N361, S362, and E365. Position 380 (A380) interacts with an anthocyanidin. 2 residues coordinate UDP-alpha-D-glucose: E381 and Q382.

Belongs to the UDP-glycosyltransferase family.

It catalyses the reaction 2-cis-(+)-abscisate + UDP-alpha-D-glucose = beta-D-glucopyranosyl cis-(+)-abscisate + UDP. Its function is as follows. Glucosyltransferase involved in the catabolism of abscisic acid (ABA). Adds a glucosyl group at the C-1 position of ABA; (S)-2-trans-abscisate is a better substrate than the natural (+)-S-abscisate or its enantiomer (-)-R-abscisate. No activity with (-)-phaseic acid (PA), methylated-ABA or with other hormones such as jasmonate, zeatin, auxin (IAA) or gibberellin A3 (GA3). The sequence is that of Abscisate beta-glucosyltransferase (AOG) from Phaseolus angularis (Azuki bean).